A 173-amino-acid chain; its full sequence is NADH-ubiquinone oxidoreductase chain 6 (173 aa).

6 helical membrane-spanning segments follow: residues 1-21 (MIYFVFVVLMGLVVGLMAVAS), 27-47 (FAALGLVFSAVVGCGFLVGYG), 53-73 (LVLFLIYLGGMLVVFAYSAAL), 82-102 (WGSWSVFLYILVYLFGFLLVG), 106-126 (YGWWYDFYWMSLDVFGEMSVL), and 141-161 (GFLLLVTGWVLLLALFVVLEI).

The protein belongs to the complex I subunit 6 family.

It is found in the mitochondrion membrane. The catalysed reaction is a ubiquinone + NADH + 5 H(+)(in) = a ubiquinol + NAD(+) + 4 H(+)(out). Functionally, core subunit of the mitochondrial membrane respiratory chain NADH dehydrogenase (Complex I) that is believed to belong to the minimal assembly required for catalysis. Complex I functions in the transfer of electrons from NADH to the respiratory chain. The immediate electron acceptor for the enzyme is believed to be ubiquinone. The chain is NADH-ubiquinone oxidoreductase chain 6 (MT-ND6) from Latimeria chalumnae (Coelacanth).